The chain runs to 290 residues: Probable adenylate kinase 2, chloroplastic (290 aa).

A compositionally biased stretch (low complexity) spans 1–10 (MASSMAATAT). The disordered stretch occupies residues 1–37 (MASSMAATATLSPPVLSAERPTVRGGLFLPPSPATSR). Residues 1–61 (MASSMAATAT…ATRKPRSLPR (61 aa)) constitute a chloroplast transit peptide. Residue 83–88 (ASGKGT) coordinates ATP. Positions 103 to 132 (SAGDLLRAEIAAGSENGKRAKEFMEKGQLV) are NMP. AMP contacts are provided by residues Arg109, 130-132 (QLV), 159-162 (GYPR), and Gln166. ATP contacts are provided by residues Arg193, Arg197, and 206-207 (IY). Positions 196–229 (GRRLDPVTGKIYHLKYSPPENEEIASRLTQRFDD) are LID. AMP-binding residues include Arg226 and Arg237.

The protein belongs to the adenylate kinase family.

The protein resides in the plastid. It localises to the chloroplast. It catalyses the reaction AMP + ATP = 2 ADP. Functionally, catalyzes the reversible transfer of the terminal phosphate group between ATP and AMP. Plays an important role in cellular energy homeostasis and in adenine nucleotide metabolism. This Oryza sativa subsp. japonica (Rice) protein is Probable adenylate kinase 2, chloroplastic.